Reading from the N-terminus, the 401-residue chain is CinA-like protein (401 aa).

The protein belongs to the CinA family.

This Thermosipho melanesiensis (strain DSM 12029 / CIP 104789 / BI429) protein is CinA-like protein.